The chain runs to 410 residues: Divergent protein kinase domain 1C (410 aa).

At 1–19 (MARAAGERGRAARCGRWRR) the chain is on the cytoplasmic side. The May mediate ER retention signature appears at 18 to 19 (RR). Residues 20–40 (GALLAFAAWTAGWVLAAALLL) traverse the membrane as a helical segment. Topologically, residues 41–410 (RAHPSVLSER…TLKELQEAEK (370 aa)) are lumenal.

It belongs to the DIPK family. In terms of processing, among the many cysteines in the lumenal domain, most are probably involved in disulfide bonds. As to expression, mainly expressed in the brain and eye, some expression in kidney and skeletal muscle.

It localises to the endoplasmic reticulum membrane. The sequence is that of Divergent protein kinase domain 1C (Dipk1c) from Mus musculus (Mouse).